Reading from the N-terminus, the 445-residue chain is Methylthioribose-1-phosphate isomerase (445 aa).

Aspartate 286 acts as the Proton donor in catalysis.

It belongs to the eIF-2B alpha/beta/delta subunits family. MtnA subfamily.

It localises to the cytoplasm. It is found in the nucleus. The enzyme catalyses 5-(methylsulfanyl)-alpha-D-ribose 1-phosphate = 5-(methylsulfanyl)-D-ribulose 1-phosphate. Its pathway is amino-acid biosynthesis; L-methionine biosynthesis via salvage pathway; L-methionine from S-methyl-5-thio-alpha-D-ribose 1-phosphate: step 1/6. Functionally, catalyzes the interconversion of methylthioribose-1-phosphate (MTR-1-P) into methylthioribulose-1-phosphate (MTRu-1-P). The polypeptide is Methylthioribose-1-phosphate isomerase (mri1) (Sclerotinia sclerotiorum (strain ATCC 18683 / 1980 / Ss-1) (White mold)).